We begin with the raw amino-acid sequence, 455 residues long: E3 ubiquitin-protein ligase IPI1 (455 aa).

Positions 1-42 (MGAEEEEEPASAVGREGGGGGGGARAAGAGAGGDTADDDDSG) are disordered. Positions 15–33 (REGGGGGGGARAAGAGAGG) are enriched in gly residues. Residues 51-97 (CSICLDAVVAGGGDRSTARLQCGHEFHLDCIGSAFNAKGVMQCPNCR) form an RING-type; atypical zinc finger. Disordered stretches follow at residues 286-311 (LDSD…SRIP) and 426-455 (QWIG…IPRM). The span at 433–442 (SPPPPPPPPA) shows a compositional bias: pro residues.

Interacts with SPL14/IPA1.

Its subcellular location is the nucleus. It catalyses the reaction S-ubiquitinyl-[E2 ubiquitin-conjugating enzyme]-L-cysteine + [acceptor protein]-L-lysine = [E2 ubiquitin-conjugating enzyme]-L-cysteine + N(6)-ubiquitinyl-[acceptor protein]-L-lysine.. It participates in protein modification; protein ubiquitination. Functionally, functions as an E3 ligase that promotes polyubiquitination of SPL14/IPA1 for subsequent proteasomal degradation. Regulates plant architecture by modulating SPL14/IPA1 abundance. Promotes the degradation of SPL14/IPA1 in panicles, while it stabilizes SPL14/IPA1 in shoot apices. Ubiquitinates the SPL14/IPA1-mediated complex with 'Lys-48'-linked polyubiquitin in panicles and 'Lys-63'-linked polyubiquitin chains in the shoot apex. The polypeptide is E3 ubiquitin-protein ligase IPI1 (Oryza sativa subsp. japonica (Rice)).